A 406-amino-acid chain; its full sequence is Argininosuccinate synthase (406 aa).

ATP-binding positions include 10-18 and Ala37; that span reads AYSGGLDTS. Tyr88 and Ser93 together coordinate L-citrulline. Position 118 (Gly118) interacts with ATP. Residues Thr120, Asn124, and Asp125 each contribute to the L-aspartate site. Asn124 is an L-citrulline binding site. L-citrulline contacts are provided by Arg128, Ser179, Ser188, Glu264, and Tyr276.

The protein belongs to the argininosuccinate synthase family. Type 1 subfamily. As to quaternary structure, homotetramer.

Its subcellular location is the cytoplasm. It carries out the reaction L-citrulline + L-aspartate + ATP = 2-(N(omega)-L-arginino)succinate + AMP + diphosphate + H(+). It functions in the pathway amino-acid biosynthesis; L-arginine biosynthesis; L-arginine from L-ornithine and carbamoyl phosphate: step 2/3. The chain is Argininosuccinate synthase from Roseobacter denitrificans (strain ATCC 33942 / OCh 114) (Erythrobacter sp. (strain OCh 114)).